The primary structure comprises 366 residues: NADH-quinone oxidoreductase subunit D (366 aa).

This sequence belongs to the complex I 49 kDa subunit family. NDH-1 is composed of 14 different subunits. Subunits NuoB, C, D, E, F, and G constitute the peripheral sector of the complex.

It localises to the cell membrane. It carries out the reaction a quinone + NADH + 5 H(+)(in) = a quinol + NAD(+) + 4 H(+)(out). Functionally, NDH-1 shuttles electrons from NADH, via FMN and iron-sulfur (Fe-S) centers, to quinones in the respiratory chain. The immediate electron acceptor for the enzyme in this species is believed to be a menaquinone. Couples the redox reaction to proton translocation (for every two electrons transferred, four hydrogen ions are translocated across the cytoplasmic membrane), and thus conserves the redox energy in a proton gradient. This Bacillus thuringiensis subsp. konkukian (strain 97-27) protein is NADH-quinone oxidoreductase subunit D.